The sequence spans 152 residues: Aminoglycoside N(6')-acetyltransferase type 1 (152 aa).

An N-acetyltransferase domain is found at 5–152 (PLVRPVETTD…AQVRCFRKPL (148 aa)). Substrate is bound by residues Trp26, Tyr73, Glu86, and Asp122. Asn127 is an acetyl-CoA binding site.

Homodimer.

The enzyme catalyses kanamycin B + acetyl-CoA = N(6')-acetylkanamycin B + CoA + H(+). Its function is as follows. Catalyzes the transfer of an acetyl group from acetyl-CoA to the 6'-amino group of aminoglycoside molecules conferring resistance to antibiotics containing the purpurosamine ring including amikacin. The polypeptide is Aminoglycoside N(6')-acetyltransferase type 1 (aacA7) (Klebsiella aerogenes (Enterobacter aerogenes)).